Consider the following 479-residue polypeptide: BRAP2 RING ZnF UBP domain-containing protein 2 (479 aa).

The RING-type; atypical zinc-finger motif lies at 167–207 (CPVCLERLDQDTGGILTTMCNHSFHCSCISNWPDSSCPVCR). The UBP-type; degenerate zinc finger occupies 201–294 (SSCPVCRYCQ…GKLVELNSHG (94 aa)). Residues Cys-218, Cys-221, Cys-230, Cys-233, Cys-238, His-245, His-249, and His-255 each contribute to the Zn(2+) site. The stretch at 328–442 (NELLQAQLEN…MAQMDGESEV (115 aa)) forms a coiled coil. Residues 434–479 (AQMDGESEVSETKEVQDATVSTTNTSSSGAGNVIHANKKKSNRRKG) are disordered. The segment covering 451-466 (ATVSTTNTSSSGAGNV) has biased composition (low complexity). Over residues 469–479 (ANKKKSNRRKG) the composition is skewed to basic residues.

Component of the heteromeric E3 ligase complex made of BRIZ1 and BRIZ2. Forms heterooligomers with BRIZ1 via coiled-coil domains.

It carries out the reaction S-ubiquitinyl-[E2 ubiquitin-conjugating enzyme]-L-cysteine + [acceptor protein]-L-lysine = [E2 ubiquitin-conjugating enzyme]-L-cysteine + N(6)-ubiquitinyl-[acceptor protein]-L-lysine.. The protein operates within protein modification; protein ubiquitination. Its function is as follows. RING-type ubiquitin E3 ligase that binds ubiquitin and is required for seed germination and post-germination growth. In Arabidopsis thaliana (Mouse-ear cress), this protein is BRAP2 RING ZnF UBP domain-containing protein 2.